Here is a 360-residue protein sequence, read N- to C-terminus: RNA-binding protein 1 (360 aa).

The RRM 1 domain maps to tyrosine 6 to arginine 82. Residues methionine 93–asparagine 113 adopt a coiled-coil conformation. Residues lysine 120–proline 197 enclose the RRM 2 domain.

Highly expressed in inflorescences and roots. Detected in leaves and seedlings, but not in stems. Expressed in vegetative shoot apex and root meristem, but not in root cap. Detected in flower buds, junction of pedicels, joints of immature siliques and pistil.

Functionally, RNA binding protein. Can also bind in vitro to single-stranded DNA. The protein is RNA-binding protein 1 (RBP1) of Arabidopsis thaliana (Mouse-ear cress).